The following is a 144-amino-acid chain: 3-dehydroquinate dehydratase (144 aa).

The Proton acceptor role is filled by Tyr22. Asn73, His79, and Asp86 together coordinate substrate. Residue His99 is the Proton donor of the active site. Substrate-binding positions include 100–101 and Arg110; that span reads LS.

The protein belongs to the type-II 3-dehydroquinase family. In terms of assembly, homododecamer.

It catalyses the reaction 3-dehydroquinate = 3-dehydroshikimate + H2O. It functions in the pathway metabolic intermediate biosynthesis; chorismate biosynthesis; chorismate from D-erythrose 4-phosphate and phosphoenolpyruvate: step 3/7. Catalyzes a trans-dehydration via an enolate intermediate. The sequence is that of 3-dehydroquinate dehydratase from Herpetosiphon aurantiacus (strain ATCC 23779 / DSM 785 / 114-95).